Reading from the N-terminus, the 446-residue chain is N-succinylarginine dihydrolase (446 aa).

Substrate-binding positions include 19 to 28 (AGLSFGNVAS), Asn-110, and 137 to 138 (HR). Residue Glu-174 is part of the active site. Arg-213 contributes to the substrate binding site. The active site involves His-249. Substrate is bound by residues Asp-251 and Asn-364. Cys-370 acts as the Nucleophile in catalysis.

It belongs to the succinylarginine dihydrolase family. In terms of assembly, homodimer.

It catalyses the reaction N(2)-succinyl-L-arginine + 2 H2O + 2 H(+) = N(2)-succinyl-L-ornithine + 2 NH4(+) + CO2. It functions in the pathway amino-acid degradation; L-arginine degradation via AST pathway; L-glutamate and succinate from L-arginine: step 2/5. In terms of biological role, catalyzes the hydrolysis of N(2)-succinylarginine into N(2)-succinylornithine, ammonia and CO(2). The sequence is that of N-succinylarginine dihydrolase from Paraburkholderia xenovorans (strain LB400).